We begin with the raw amino-acid sequence, 501 residues long: Aminoaldehyde dehydrogenase ALDH10A8, chloroplastic (501 aa).

Asp-99 and Leu-189 together coordinate Na(+). NAD(+)-binding positions include 238-243 (GSFATG) and 238-245 (GSFATGSK). The active-site Proton acceptor is Glu-260. Cys-294 and Glu-393 together coordinate NAD(+). Cys-294 serves as the catalytic Nucleophile.

The protein belongs to the aldehyde dehydrogenase family. Homodimer. Widely expressed.

It is found in the cytoplasm. Its subcellular location is the plastid. It localises to the chloroplast. The enzyme catalyses 4-aminobutanal + NAD(+) + H2O = 4-aminobutanoate + NADH + 2 H(+). It catalyses the reaction 3-aminopropanal + NAD(+) + H2O = beta-alanine + NADH + 2 H(+). The catalysed reaction is 4-(trimethylamino)butanal + NAD(+) + H2O = 4-(trimethylamino)butanoate + NADH + 2 H(+). It carries out the reaction 4-guanidinobutanal + NAD(+) + H2O = 4-guanidinobutanoate + NADH + 2 H(+). The enzyme catalyses betaine aldehyde + NAD(+) + H2O = glycine betaine + NADH + 2 H(+). The protein operates within amine and polyamine biosynthesis; betaine biosynthesis via choline pathway; betaine from betaine aldehyde: step 1/1. Dehydrogenase that catalyzes the oxidation of several aminoaldehydes. Metabolizes and detoxifies aldehyde products of polyamine degradation to non-toxic amino acids. Catalyzes the oxidation of 4-aminobutanal and 3-aminopropanal to 4-aminobutanoate and beta-alanine, respectively. Production of 4-aminobutinoate by ALDH10A8 may confer tolerance to salt stress. Catalyzes the oxidation of 4-(trimethylamino)butanal and 4-guanidinobutanal to 4-trimethylammoniobutanoate and 4-guanidinobutanoate, respectively. Involved in glycine betaine biosynthesis. Catalyzes with low efficiency the oxidation of betaine aldehyde to glycine betaine. This Arabidopsis thaliana (Mouse-ear cress) protein is Aminoaldehyde dehydrogenase ALDH10A8, chloroplastic.